We begin with the raw amino-acid sequence, 499 residues long: Lysine--tRNA ligase (499 aa).

Mg(2+)-binding residues include Glu409 and Glu416.

It belongs to the class-II aminoacyl-tRNA synthetase family. In terms of assembly, homodimer. It depends on Mg(2+) as a cofactor.

It is found in the cytoplasm. The enzyme catalyses tRNA(Lys) + L-lysine + ATP = L-lysyl-tRNA(Lys) + AMP + diphosphate. In Thioalkalivibrio sulfidiphilus (strain HL-EbGR7), this protein is Lysine--tRNA ligase.